The following is a 374-amino-acid chain: Dual-specificity RNA methyltransferase RlmN (374 aa).

Glutamate 91 acts as the Proton acceptor in catalysis. A Radical SAM core domain is found at 97–340 (EDDRGTLCVS…TTVRKTRGDD (244 aa)). Cysteine 104 and cysteine 345 form a disulfide bridge. [4Fe-4S] cluster is bound by residues cysteine 111, cysteine 115, and cysteine 118. Residues 166–167 (GE), serine 198, 220–222 (SLH), and asparagine 302 each bind S-adenosyl-L-methionine. The S-methylcysteine intermediate role is filled by cysteine 345.

This sequence belongs to the radical SAM superfamily. RlmN family. [4Fe-4S] cluster serves as cofactor.

It is found in the cytoplasm. The catalysed reaction is adenosine(2503) in 23S rRNA + 2 reduced [2Fe-2S]-[ferredoxin] + 2 S-adenosyl-L-methionine = 2-methyladenosine(2503) in 23S rRNA + 5'-deoxyadenosine + L-methionine + 2 oxidized [2Fe-2S]-[ferredoxin] + S-adenosyl-L-homocysteine. It catalyses the reaction adenosine(37) in tRNA + 2 reduced [2Fe-2S]-[ferredoxin] + 2 S-adenosyl-L-methionine = 2-methyladenosine(37) in tRNA + 5'-deoxyadenosine + L-methionine + 2 oxidized [2Fe-2S]-[ferredoxin] + S-adenosyl-L-homocysteine. Functionally, specifically methylates position 2 of adenine 2503 in 23S rRNA and position 2 of adenine 37 in tRNAs. m2A2503 modification seems to play a crucial role in the proofreading step occurring at the peptidyl transferase center and thus would serve to optimize ribosomal fidelity. The polypeptide is Dual-specificity RNA methyltransferase RlmN (Delftia acidovorans (strain DSM 14801 / SPH-1)).